The primary structure comprises 362 residues: Carbamoyl phosphate synthase small chain (362 aa).

Residues 1–172 form a CPSase region; it reads MKAFLVLDNG…SKYIFGTHTG (172 aa). S45, G224, and G226 together coordinate L-glutamine. Residues 176–362 form the Glutamine amidotransferase type-1 domain; that stretch reads KLAVYDYGVK…YDLVEKTKKG (187 aa). C252 functions as the Nucleophile in the catalytic mechanism. Residues L253, Q256, N294, G296, and F297 each coordinate L-glutamine. Active-site residues include H335 and E337.

It belongs to the CarA family. As to quaternary structure, composed of two chains; the small (or glutamine) chain promotes the hydrolysis of glutamine to ammonia, which is used by the large (or ammonia) chain to synthesize carbamoyl phosphate. Tetramer of heterodimers (alpha,beta)4.

It catalyses the reaction hydrogencarbonate + L-glutamine + 2 ATP + H2O = carbamoyl phosphate + L-glutamate + 2 ADP + phosphate + 2 H(+). The catalysed reaction is L-glutamine + H2O = L-glutamate + NH4(+). The protein operates within amino-acid biosynthesis; L-arginine biosynthesis; carbamoyl phosphate from bicarbonate: step 1/1. It participates in pyrimidine metabolism; UMP biosynthesis via de novo pathway; (S)-dihydroorotate from bicarbonate: step 1/3. Its function is as follows. Small subunit of the glutamine-dependent carbamoyl phosphate synthetase (CPSase). CPSase catalyzes the formation of carbamoyl phosphate from the ammonia moiety of glutamine, carbonate, and phosphate donated by ATP, constituting the first step of 2 biosynthetic pathways, one leading to arginine and/or urea and the other to pyrimidine nucleotides. The small subunit (glutamine amidotransferase) binds and cleaves glutamine to supply the large subunit with the substrate ammonia. The polypeptide is Carbamoyl phosphate synthase small chain (Leptospira interrogans serogroup Icterohaemorrhagiae serovar Lai (strain 56601)).